A 254-amino-acid chain; its full sequence is Phosphoribosylaminoimidazole-succinocarboxamide synthase (254 aa).

It belongs to the SAICAR synthetase family.

It carries out the reaction 5-amino-1-(5-phospho-D-ribosyl)imidazole-4-carboxylate + L-aspartate + ATP = (2S)-2-[5-amino-1-(5-phospho-beta-D-ribosyl)imidazole-4-carboxamido]succinate + ADP + phosphate + 2 H(+). Its pathway is purine metabolism; IMP biosynthesis via de novo pathway; 5-amino-1-(5-phospho-D-ribosyl)imidazole-4-carboxamide from 5-amino-1-(5-phospho-D-ribosyl)imidazole-4-carboxylate: step 1/2. The protein is Phosphoribosylaminoimidazole-succinocarboxamide synthase of Sinorhizobium fredii (strain NBRC 101917 / NGR234).